The sequence spans 232 residues: Glycerol-3-phosphate acyltransferase 4 (232 aa).

6 helical membrane passes run 4-24 (VFLI…AYLL), 54-76 (LGLA…AGWL), 80-99 (LWQQ…WPVF), 107-127 (GIAT…LIAL), 143-163 (VFLG…FFGV), and 168-188 (TVTW…LMAP).

This sequence belongs to the PlsY family. As to quaternary structure, probably interacts with PlsX.

It localises to the cell membrane. The catalysed reaction is an acyl phosphate + sn-glycerol 3-phosphate = a 1-acyl-sn-glycero-3-phosphate + phosphate. Its pathway is lipid metabolism; phospholipid metabolism. Functionally, catalyzes the transfer of an acyl group from acyl-phosphate (acyl-PO(4)) to glycerol-3-phosphate (G3P) to form lysophosphatidic acid (LPA). This enzyme utilizes acyl-phosphate as fatty acyl donor, but not acyl-CoA or acyl-ACP. The sequence is that of Glycerol-3-phosphate acyltransferase 4 from Dehalococcoides mccartyi (strain CBDB1).